Reading from the N-terminus, the 104-residue chain is Large ribosomal subunit protein uL24 (104 aa).

This sequence belongs to the universal ribosomal protein uL24 family. Part of the 50S ribosomal subunit.

In terms of biological role, one of two assembly initiator proteins, it binds directly to the 5'-end of the 23S rRNA, where it nucleates assembly of the 50S subunit. Its function is as follows. One of the proteins that surrounds the polypeptide exit tunnel on the outside of the subunit. The sequence is that of Large ribosomal subunit protein uL24 from Idiomarina loihiensis (strain ATCC BAA-735 / DSM 15497 / L2-TR).